Here is a 242-residue protein sequence, read N- to C-terminus: Pyridoxine 5'-phosphate synthase (242 aa).

Position 6 (Asn-6) interacts with 3-amino-2-oxopropyl phosphate. Position 8–9 (8–9) interacts with 1-deoxy-D-xylulose 5-phosphate; it reads DH. Arg-17 serves as a coordination point for 3-amino-2-oxopropyl phosphate. The Proton acceptor role is filled by His-42. Arg-44 and His-49 together coordinate 1-deoxy-D-xylulose 5-phosphate. Glu-69 functions as the Proton acceptor in the catalytic mechanism. Thr-99 provides a ligand contact to 1-deoxy-D-xylulose 5-phosphate. Residue His-193 is the Proton donor of the active site. 3-amino-2-oxopropyl phosphate is bound by residues Gly-194 and 217–218; that span reads GH.

This sequence belongs to the PNP synthase family. Homooctamer; tetramer of dimers.

The protein resides in the cytoplasm. The catalysed reaction is 3-amino-2-oxopropyl phosphate + 1-deoxy-D-xylulose 5-phosphate = pyridoxine 5'-phosphate + phosphate + 2 H2O + H(+). It functions in the pathway cofactor biosynthesis; pyridoxine 5'-phosphate biosynthesis; pyridoxine 5'-phosphate from D-erythrose 4-phosphate: step 5/5. Catalyzes the complicated ring closure reaction between the two acyclic compounds 1-deoxy-D-xylulose-5-phosphate (DXP) and 3-amino-2-oxopropyl phosphate (1-amino-acetone-3-phosphate or AAP) to form pyridoxine 5'-phosphate (PNP) and inorganic phosphate. The sequence is that of Pyridoxine 5'-phosphate synthase from Aquifex aeolicus (strain VF5).